A 1439-amino-acid chain; its full sequence is Myomesin-3 (1439 aa).

The tract at residues methionine 1–glutamate 57 is disordered. The segment covering histidine 22–histidine 38 has biased composition (basic and acidic residues). A compositionally biased stretch (polar residues) spans serine 39–arginine 48. The stretch at glutamine 119 to cysteine 149 forms a coiled coil. Ig-like C2-type domains are found at residues proline 154–leucine 246 and proline 269–phenylalanine 362. 5 consecutive Fibronectin type-III domains span residues serine 376–tyrosine 471, alanine 504–lysine 599, proline 605–alanine 698, alanine 704–tryptophan 799, and proline 806–lysine 901. Ig-like C2-type domains are found at residues proline 1122–threonine 1207 and alanine 1336–serine 1425.

As to quaternary structure, homodimer. Mainly expressed in slow muscle, extraocular muscle and embryonic/neonatal skeletal muscle (at protein level). Expression in skeletal muscle is fiber type specific, with the highest levels in type IIA fibers (intermediate speed) and lower levels in type I fibers.

The protein resides in the cytoplasm. It localises to the myofibril. It is found in the sarcomere. The protein localises to the m line. May link the intermediate filament cytoskeleton to the M-disk of the myofibrils in striated muscle. This Mus musculus (Mouse) protein is Myomesin-3 (Myom3).